The chain runs to 929 residues: Ras guanine nucleotide exchange factor M (929 aa).

Positions 1–15 are enriched in polar residues; sequence MWQKPSLTKSMMNEV. Disordered regions lie at residues 1-102 and 169-316; these read MWQK…AAGS and TNNN…SKSL. Residues 16–33 show a composition bias toward low complexity; sequence SSNSPKSPTLTSSPSTQS. Gly residues predominate over residues 44 to 67; that stretch reads LDGGGGGSNRLIFGGSGGGSGGGS. Low complexity-rich tracts occupy residues 68 to 80 and 169 to 191; these read LPSS…VNPF and TNNN…NNDG. Over residues 192–202 the composition is skewed to gly residues; the sequence is SGSGSGAGGSF. Residues 203 to 246 show a composition bias toward low complexity; that stretch reads IGTTTSAKTTSTTSTSAATTTTTTTTSSSSSSPSSSSPSSTSPT. A compositionally biased stretch (polar residues) spans 247 to 256; that stretch reads IASNNDNNNK. Residues 270–287 show a composition bias toward low complexity; it reads PPLTLSQSQTQQQQQQKV. Polar residues predominate over residues 295-305; that stretch reads RFSTNSSGSQS. Residues 390–528 form the N-terminal Ras-GEF domain; that stretch reads NKFVVVSGPK…PILDLYEKLK (139 aa). The disordered stretch occupies residues 540–583; sequence SLSGSGGISNNNNGSDLKNSNNGNNSSNNNNSSSNSSSSSSSSD. The Ras-GEF domain occupies 676–911; sequence SPQDIAKQLT…YAFSKFIESP (236 aa).

Its function is as follows. Promotes the exchange of Ras-bound GDP by GTP. In Dictyostelium discoideum (Social amoeba), this protein is Ras guanine nucleotide exchange factor M (gefM).